The chain runs to 126 residues: MKDWLDSVNWNADGLVPAIAQDATSGRILMMAWMNRESLRLTAEKQQAIYWSRSRNQLWHKGETSGHVQHVREIRLDCDEDVIVLQVVQEGGIACHTGRESCFYRVFRNGEWVAVDPVLKDPAEIY.

Residue aspartate 77 participates in Mg(2+) binding. Cysteine 78 contacts Zn(2+). Aspartate 79 and aspartate 81 together coordinate Mg(2+). The Zn(2+) site is built by cysteine 95 and cysteine 102.

Belongs to the PRA-CH family. Homodimer. Requires Mg(2+) as cofactor. It depends on Zn(2+) as a cofactor.

It localises to the cytoplasm. It carries out the reaction 1-(5-phospho-beta-D-ribosyl)-5'-AMP + H2O = 1-(5-phospho-beta-D-ribosyl)-5-[(5-phospho-beta-D-ribosylamino)methylideneamino]imidazole-4-carboxamide. It participates in amino-acid biosynthesis; L-histidine biosynthesis; L-histidine from 5-phospho-alpha-D-ribose 1-diphosphate: step 3/9. In terms of biological role, catalyzes the hydrolysis of the adenine ring of phosphoribosyl-AMP. In Cellvibrio japonicus (strain Ueda107) (Pseudomonas fluorescens subsp. cellulosa), this protein is Phosphoribosyl-AMP cyclohydrolase.